A 411-amino-acid polypeptide reads, in one-letter code: Serine hydroxymethyltransferase (411 aa).

A (6S)-5,6,7,8-tetrahydrofolate-binding site is contributed by 120 to 122 (GHL). K225 carries the post-translational modification N6-(pyridoxal phosphate)lysine. (6S)-5,6,7,8-tetrahydrofolate contacts are provided by residues E241 and 350 to 352 (SPF).

The protein belongs to the SHMT family. In terms of assembly, homodimer. Requires pyridoxal 5'-phosphate as cofactor.

The protein localises to the cytoplasm. It catalyses the reaction (6R)-5,10-methylene-5,6,7,8-tetrahydrofolate + glycine + H2O = (6S)-5,6,7,8-tetrahydrofolate + L-serine. It functions in the pathway one-carbon metabolism; tetrahydrofolate interconversion. The protein operates within amino-acid biosynthesis; glycine biosynthesis; glycine from L-serine: step 1/1. In terms of biological role, catalyzes the reversible interconversion of serine and glycine with tetrahydrofolate (THF) serving as the one-carbon carrier. This reaction serves as the major source of one-carbon groups required for the biosynthesis of purines, thymidylate, methionine, and other important biomolecules. Also exhibits THF-independent aldolase activity toward beta-hydroxyamino acids, producing glycine and aldehydes, via a retro-aldol mechanism. The protein is Serine hydroxymethyltransferase of Limosilactobacillus fermentum (strain NBRC 3956 / LMG 18251) (Lactobacillus fermentum).